We begin with the raw amino-acid sequence, 130 residues long: Small ribosomal subunit protein uS9 (130 aa).

The tract at residues 109–130 (RVKERKKYGQKGARAKFQFSKR) is disordered.

The protein belongs to the universal ribosomal protein uS9 family.

In Desulfotalea psychrophila (strain LSv54 / DSM 12343), this protein is Small ribosomal subunit protein uS9.